Reading from the N-terminus, the 128-residue chain is Glycine cleavage system H protein (128 aa).

One can recognise a Lipoyl-binding domain in the interval 25-107 (TFKVGITDHA…YEAGWLFTVR (83 aa)). An N6-lipoyllysine modification is found at Lys66.

This sequence belongs to the GcvH family. The glycine cleavage system is composed of four proteins: P, T, L and H. (R)-lipoate serves as cofactor.

The glycine cleavage system catalyzes the degradation of glycine. The H protein shuttles the methylamine group of glycine from the P protein to the T protein. This is Glycine cleavage system H protein from Kocuria rhizophila (strain ATCC 9341 / DSM 348 / NBRC 103217 / DC2201).